A 66-amino-acid chain; its full sequence is Large ribosomal subunit protein uL29 (66 aa).

Belongs to the universal ribosomal protein uL29 family.

The polypeptide is Large ribosomal subunit protein uL29 (Brucella abortus (strain S19)).